The primary structure comprises 178 residues: Large ribosomal subunit protein uL6 (178 aa).

This sequence belongs to the universal ribosomal protein uL6 family. In terms of assembly, part of the 50S ribosomal subunit.

In terms of biological role, this protein binds to the 23S rRNA, and is important in its secondary structure. It is located near the subunit interface in the base of the L7/L12 stalk, and near the tRNA binding site of the peptidyltransferase center. This is Large ribosomal subunit protein uL6 from Listeria monocytogenes serotype 4a (strain HCC23).